The following is a 318-amino-acid chain: Thymidylate synthase (318 aa).

Residues arginine 25 and 180 to 181 contribute to the dUMP site; that span reads RR. The active-site Nucleophile is cysteine 200. DUMP is bound by residues 220–223, asparagine 231, and 261–263; these read RSGD and HIY. Aspartate 223 serves as a coordination point for (6R)-5,10-methylene-5,6,7,8-tetrahydrofolate. Alanine 317 is a binding site for (6R)-5,10-methylene-5,6,7,8-tetrahydrofolate.

The protein belongs to the thymidylate synthase family. Bacterial-type ThyA subfamily. As to quaternary structure, homodimer.

The protein localises to the cytoplasm. The catalysed reaction is dUMP + (6R)-5,10-methylene-5,6,7,8-tetrahydrofolate = 7,8-dihydrofolate + dTMP. The protein operates within pyrimidine metabolism; dTTP biosynthesis. In terms of biological role, catalyzes the reductive methylation of 2'-deoxyuridine-5'-monophosphate (dUMP) to 2'-deoxythymidine-5'-monophosphate (dTMP) while utilizing 5,10-methylenetetrahydrofolate (mTHF) as the methyl donor and reductant in the reaction, yielding dihydrofolate (DHF) as a by-product. This enzymatic reaction provides an intracellular de novo source of dTMP, an essential precursor for DNA biosynthesis. The chain is Thymidylate synthase from Lactobacillus delbrueckii subsp. bulgaricus (strain ATCC BAA-365 / Lb-18).